A 467-amino-acid polypeptide reads, in one-letter code: MTTDTRLEYDSLGAVEVPADCYWGAQTARSLKHFAIGSQRMPLAVIHAMARLKKAAAIANRDLGVLDPEKAKWIIQAADEVIAGQWDDQFPLAIWQTGSGTQTNMNVNEVIANRAIELAGGVKGSKSPIHPNDHVNCSQSSNDTFPTAMHVATVLALQERLLPTLRHLLTVLQEKAAAFAEIIKIGRTHLMDAVPLTLGQEFSGYASQIAAAQAHIEYALQHLYPLAIGATAVGTGLNAPAGFGDRVAAELAQMTGYPFRKAENPFAALAAHDPLVMLSGALKTLAAALMKIANDIRWLGSGPRCGLGELRLPANEPGSSIMPGKVNPTQCEALTMVCVQVMGNDAAVGIAGSQGNFELNVYKPLIIYNVLQSIALLSDAAQSFTDHCLVGVEPNRQQIQAYVERSLMLVTALNPHIGYDKAAAVAKKAYSEGKTLKEAAVELGYLTAEEFDRWVRLELMLGEKGTS.

Residues 99-101 (SGT), 130-133 (HPND), 140-142 (SSN), and Thr-188 contribute to the substrate site. The Proton donor/acceptor role is filled by His-189. Ser-319 is an active-site residue. Substrate contacts are provided by residues Ser-320 and 325-327 (KVN).

The protein belongs to the class-II fumarase/aspartase family. Fumarase subfamily. As to quaternary structure, homotetramer.

Its subcellular location is the cytoplasm. It carries out the reaction (S)-malate = fumarate + H2O. The protein operates within carbohydrate metabolism; tricarboxylic acid cycle; (S)-malate from fumarate: step 1/1. In terms of biological role, involved in the TCA cycle. Catalyzes the stereospecific interconversion of fumarate to L-malate. The chain is Fumarate hydratase class II from Thermosynechococcus vestitus (strain NIES-2133 / IAM M-273 / BP-1).